The primary structure comprises 178 residues: Large ribosomal subunit protein uL13m (178 aa).

Residue Ser-2 is modified to N-acetylserine.

It belongs to the universal ribosomal protein uL13 family. As to quaternary structure, component of the mitochondrial large ribosomal subunit (mt-LSU). Mature mammalian 55S mitochondrial ribosomes consist of a small (28S) and a large (39S) subunit. The 28S small subunit contains a 12S ribosomal RNA (12S mt-rRNA) and 30 different proteins. The 39S large subunit contains a 16S rRNA (16S mt-rRNA), a copy of mitochondrial valine transfer RNA (mt-tRNA(Val)), which plays an integral structural role, and 52 different proteins. Interacts with OXA1L.

The protein resides in the mitochondrion. The protein is Large ribosomal subunit protein uL13m (MRPL13) of Homo sapiens (Human).